Consider the following 251-residue polypeptide: Imidazole glycerol phosphate synthase subunit HisF (251 aa).

Catalysis depends on residues Asp11 and Asp130.

This sequence belongs to the HisA/HisF family. Heterodimer of HisH and HisF.

It is found in the cytoplasm. The catalysed reaction is 5-[(5-phospho-1-deoxy-D-ribulos-1-ylimino)methylamino]-1-(5-phospho-beta-D-ribosyl)imidazole-4-carboxamide + L-glutamine = D-erythro-1-(imidazol-4-yl)glycerol 3-phosphate + 5-amino-1-(5-phospho-beta-D-ribosyl)imidazole-4-carboxamide + L-glutamate + H(+). It participates in amino-acid biosynthesis; L-histidine biosynthesis; L-histidine from 5-phospho-alpha-D-ribose 1-diphosphate: step 5/9. Its function is as follows. IGPS catalyzes the conversion of PRFAR and glutamine to IGP, AICAR and glutamate. The HisF subunit catalyzes the cyclization activity that produces IGP and AICAR from PRFAR using the ammonia provided by the HisH subunit. The sequence is that of Imidazole glycerol phosphate synthase subunit HisF from Streptococcus mutans serotype c (strain ATCC 700610 / UA159).